The primary structure comprises 415 residues: S-inosyl-L-homocysteine hydrolase (415 aa).

Substrate is bound by residues D123 and E148. Residue 149–151 (TTT) participates in NAD(+) binding. Substrate is bound by residues K178 and D182. Residues N183, 212–217 (GYGWCG), E235, 291–293 (AGH), and N337 contribute to the NAD(+) site.

Belongs to the adenosylhomocysteinase family. It depends on NAD(+) as a cofactor.

It is found in the cytoplasm. It catalyses the reaction S-inosyl-L-homocysteine + H2O = L-homocysteine + inosine. Its pathway is amino-acid biosynthesis; S-adenosyl-L-methionine biosynthesis. Its function is as follows. Catalyzes the hydrolysis of S-inosyl-L-homocysteine (SIH) to L-homocysteine (Hcy) and inosine. Likely functions in a S-adenosyl-L-methionine (SAM) recycling pathway from S-adenosyl-L-homocysteine (SAH) produced from SAM-dependent methylation reactions. Can also catalyze the reverse reaction in vitro, i.e. the synthesis of SIH from Hcy and inosine. This chain is S-inosyl-L-homocysteine hydrolase, found in Methanococcus maripaludis (strain DSM 14266 / JCM 13030 / NBRC 101832 / S2 / LL).